A 714-amino-acid chain; its full sequence is Fatty acid oxidation complex subunit alpha (714 aa).

The interval 1–190 (MEMASAFTLN…KLGLVDDVVP (190 aa)) is enoyl-CoA hydratase. The segment at 306–714 (APLNSVGILG…FWKTTATDLQ (409 aa)) is 3-hydroxyacyl-CoA dehydrogenase.

It in the N-terminal section; belongs to the enoyl-CoA hydratase/isomerase family. In the central section; belongs to the 3-hydroxyacyl-CoA dehydrogenase family. As to quaternary structure, heterotetramer of two alpha chains (FadJ) and two beta chains (FadI).

The protein localises to the cytoplasm. The catalysed reaction is a (3S)-3-hydroxyacyl-CoA = a (2E)-enoyl-CoA + H2O. The enzyme catalyses a 4-saturated-(3S)-3-hydroxyacyl-CoA = a (3E)-enoyl-CoA + H2O. It catalyses the reaction a (3S)-3-hydroxyacyl-CoA + NAD(+) = a 3-oxoacyl-CoA + NADH + H(+). It carries out the reaction (3S)-3-hydroxybutanoyl-CoA = (3R)-3-hydroxybutanoyl-CoA. It functions in the pathway lipid metabolism; fatty acid beta-oxidation. Catalyzes the formation of a hydroxyacyl-CoA by addition of water on enoyl-CoA. Also exhibits 3-hydroxyacyl-CoA epimerase and 3-hydroxyacyl-CoA dehydrogenase activities. This Shigella boydii serotype 4 (strain Sb227) protein is Fatty acid oxidation complex subunit alpha.